A 406-amino-acid polypeptide reads, in one-letter code: Tyrosine-specific transport system 2 (406 aa).

The next 11 membrane-spanning stretches (helical) occupy residues 7–27 (FGSA…AMPL), 38–58 (LLLL…FVEV), 83–103 (IFAT…YITG), 119–139 (AMSL…FVVV), 150–170 (VLFI…LPKV), 183–203 (AFVV…VIMA), 219–239 (AILI…LATH), 279–299 (VFSS…VFEG), 314–334 (FVLT…YPEG), 335–355 (FITA…ILPI), and 376–396 (NFAL…PFLI).

Belongs to the amino acid/polyamine transporter 2 family. Mtr/TnaB/TyrP permease subfamily.

Its subcellular location is the cell inner membrane. It catalyses the reaction L-tyrosine(in) + H(+)(in) = L-tyrosine(out) + H(+)(out). Its function is as follows. Transports tyrosine across the cytoplasmic membrane. The transport system is energized by the proton motive force. This is Tyrosine-specific transport system 2 (tyrP-B) from Haemophilus influenzae (strain ATCC 51907 / DSM 11121 / KW20 / Rd).